A 311-amino-acid chain; its full sequence is Retinol dehydrogenase 8 (311 aa).

Residue 9-18 (LISGCSSGIG) participates in NADP(+) binding. Helical transmembrane passes span 86 to 106 (VLVNNAGMGLVGPLEGLSLAA), 137 to 157 (IVVISSVMGLQGVIFNDVYAA), and 169 to 189 (LAIQLLQFNIFISLVEPGPVV). Ser142 is a substrate binding site. The active-site Proton acceptor is Tyr155.

This sequence belongs to the short-chain dehydrogenases/reductases (SDR) family. In terms of tissue distribution, detected in photoreceptor outer segments in the retina (at protein level).

It localises to the membrane. The catalysed reaction is all-trans-retinol + NADP(+) = all-trans-retinal + NADPH + H(+). Retinol dehydrogenase with a clear preference for NADP. Converts all-trans-retinal to all-trans-retinol. May play a role in the regeneration of visual pigment at high light intensity. The protein is Retinol dehydrogenase 8 (RDH8) of Homo sapiens (Human).